The chain runs to 366 residues: Patr class I histocompatibility antigen, C alpha chain (366 aa).

Residues 1–24 form the signal peptide; sequence MRVTAPRTLLLLLSGGLALTETWA. The segment at 25-114 is alpha-1; the sequence is GSHSLRYFDT…LRGYYNQSED (90 aa). Topologically, residues 25–308 are extracellular; it reads GSHSLRYFDT…KPTSQPTIPI (284 aa). Asn110 carries an N-linked (GlcNAc...) asparagine glycan. The interval 115–206 is alpha-2; the sequence is GSHTLQWMYG…ENGKETLQRT (92 aa). 2 disulfides stabilise this stretch: Cys125/Cys192 and Cys227/Cys283. The alpha-3 stretch occupies residues 207-298; that stretch reads ECPKTHMTHH…GLPEPLTLRW (92 aa). The Ig-like C1-type domain occupies 209–297; the sequence is PKTHMTHHPV…EGLPEPLTLR (89 aa). The connecting peptide stretch occupies residues 299-308; it reads KPTSQPTIPI. The helical transmembrane segment at 309 to 332 threads the bilayer; it reads VGIVAGLAVLAVLAVLGAVVTAMM. Residues 333 to 366 are Cytoplasmic-facing; the sequence is CRRKSSGGKGGSCSQAACSNSAQGSDESLIACKA. A phosphoserine mark is found at Ser357 and Ser360.

It belongs to the MHC class I family. As to quaternary structure, heterodimer of an alpha chain and a beta chain (beta-2-microglobulin).

Its subcellular location is the membrane. Involved in the presentation of foreign antigens to the immune system. This chain is Patr class I histocompatibility antigen, C alpha chain, found in Pan troglodytes (Chimpanzee).